A 429-amino-acid chain; its full sequence is MKVLVIGNGGREHALAWKAAQSPLVETVFVAPGNAGTALEPALQNVAIGVTDIPALLDFAQNEKVDLTIVGPEAPLVKGVVDTFRAAGLKIFGPTAGAAQLEGSKAFTKDFLARHNIPTAEYQNFTEVEPALAYLREKGAPIVIKADGLAAGKGVIVAMTLEEAEAAVRDMLAGNAFGDAGHRIVIEEFLDGEEASFIVMVDGEHVLPMATSQDHKRVGDKDTGPNTGGMGAYSPAPVVTDEVHQRTMERIIWPTVKGMAAEGNTYTGFLYAGLMIDKQGNPKVIEFNCRFGDPETQPIMLRMKSDLVELCLAACEGKLDEKTSEWDERASLGVVMAAGGYPGDYRTGDVIHGLPLEEVADGKVFHAGTKLADDEQVVTSGGRVLCVTALGHTVAEAQKRAYALMTDIHWDDCFCRKDIGWRAIEREQN.

In terms of domain architecture, ATP-grasp spans 109–316; it reads KDFLARHNIP…LVELCLAACE (208 aa). Position 135–196 (135–196) interacts with ATP; sequence LREKGAPIVI…EEFLDGEEAS (62 aa). A disordered region spans residues 212–236; it reads SQDHKRVGDKDTGPNTGGMGAYSPA. Positions 213 to 223 are enriched in basic and acidic residues; that stretch reads QDHKRVGDKDT. Mg(2+) is bound by residues Glu286 and Asn288.

Belongs to the GARS family. In terms of assembly, monomer. The cofactor is Mg(2+). Mn(2+) is required as a cofactor.

The catalysed reaction is 5-phospho-beta-D-ribosylamine + glycine + ATP = N(1)-(5-phospho-beta-D-ribosyl)glycinamide + ADP + phosphate + H(+). It participates in purine metabolism; IMP biosynthesis via de novo pathway; N(1)-(5-phospho-D-ribosyl)glycinamide from 5-phospho-alpha-D-ribose 1-diphosphate: step 2/2. The protein is Phosphoribosylamine--glycine ligase of Escherichia coli O6:H1 (strain CFT073 / ATCC 700928 / UPEC).